The following is a 413-amino-acid chain: Histidine--tRNA ligase (413 aa).

Belongs to the class-II aminoacyl-tRNA synthetase family. As to quaternary structure, homodimer.

It localises to the cytoplasm. The catalysed reaction is tRNA(His) + L-histidine + ATP = L-histidyl-tRNA(His) + AMP + diphosphate + H(+). The polypeptide is Histidine--tRNA ligase (hisS) (Rickettsia prowazekii (strain Madrid E)).